Consider the following 531-residue polypeptide: Peptide chain release factor 3 (531 aa).

The region spanning 10-279 (RDRRTFAIIS…DFAQLAPPPR (270 aa)) is the tr-type G domain. GTP-binding positions include 19-26 (SHPDAGKT), 87-91 (DTPGH), and 141-144 (NKLD).

It belongs to the TRAFAC class translation factor GTPase superfamily. Classic translation factor GTPase family. PrfC subfamily.

Its subcellular location is the cytoplasm. In terms of biological role, increases the formation of ribosomal termination complexes and stimulates activities of RF-1 and RF-2. It binds guanine nucleotides but is not codon-specific. It may interact directly with the ribosome. The stimulation of RF-1 and RF-2 is significantly reduced by GTP and GDP, but not by GMP. This Dichelobacter nodosus (Bacteroides nodosus) protein is Peptide chain release factor 3 (prfC).